The chain runs to 573 residues: MANAEVSVPVGDVVVVPTEGNEGENPEDTKTQVILQLQPVQQGLFIDGHFYNRIYEAGSENNTAVVAVETHTIHKIEEGIDTGTIEANEDMEIAYPITCGESKAILLWKKFVCPGINVKCVKFNDQLISPKHFVHLAGKSTLKDWKRAIRLGGIMLRKMMDSGQIDFYQHDKVCSNTCRSTKFDLLISSARAPVPGQQTSVVQTPTSADGSITQIAISEESMEEAGLEWNSALTAAVTMATEEGVKKDSEEISEDTLMFWKGIADVGLMEEVVCNIQKEIEELLRGVQQRLIQAPFQVTDAAVLNNVAHTFGLMDTVKKVLDNRRNQVEQGEEQFLYTLTDLERQLEEQKKQGQDHRLKSQTVQNVVLMPVSTPKPPKRPRLQRPASTTVLSPSPPVQQPQFTVISPITITPVGQSFSMGNIPVATLSQGSSPVTVHTLPSGPQLFRYATVVSSAKSSSPDTVTIHPSSSLALLSSTAMQDGSTLGNMTTMVSPVELVAMESGLTSAIQAVESTSEDGQTIIEIDPAPDPEAEDTEGKAVILETELRTEEKVVAEMEEHQHQVHNVEIVVLED.

An N-acetylalanine modification is found at Ala2. The region spanning 82–166 (TGTIEANEDM…RKMMDSGQID (85 aa)) is the SAND domain. Cys113 contributes to the Zn(2+) binding site. Residues Lys139, Lys143, Lys146, and Arg157 each coordinate DNA. Zn(2+) is bound by residues His170, Cys174, and Cys178. Positions 321–367 (LDNRRNQVEQGEEQFLYTLTDLERQLEEQKKQGQDHRLKSQTVQNVV) form a coiled coil. The disordered stretch occupies residues 370 to 398 (PVSTPKPPKRPRLQRPASTTVLSPSPPVQ).

Homodimer, and heterodimer of GMEB1 and GMEB2. GMEB1 and GMEB2 form the parvovirus initiator complex (PIF). Interacts with the glucocorticoid receptor (NR3C1) and NCOA2/TIF2. May interact with HSP27 and CREB-binding protein (CBP).

It is found in the nucleus. Its subcellular location is the cytoplasm. Functionally, trans-acting factor that binds to glucocorticoid modulatory elements (GME) present in the TAT (tyrosine aminotransferase) promoter and increases sensitivity to low concentrations of glucocorticoids. Also binds to the transferrin receptor promoter. Essential auxiliary factor for the replication of parvoviruses. The chain is Glucocorticoid modulatory element-binding protein 1 (GMEB1) from Homo sapiens (Human).